We begin with the raw amino-acid sequence, 274 residues long: Thiamine kinase (274 aa).

Belongs to the thiamine kinase family.

It carries out the reaction thiamine + ATP = thiamine phosphate + ADP + H(+). Its pathway is cofactor biosynthesis; thiamine diphosphate biosynthesis; thiamine phosphate from thiamine: step 1/1. In terms of biological role, catalyzes the ATP-dependent phosphorylation of thiamine to thiamine phosphate. Is involved in thiamine salvage. This chain is Thiamine kinase, found in Shigella boydii serotype 4 (strain Sb227).